The sequence spans 122 residues: Conotoxin flf14.2 (122 aa).

The signal sequence occupies residues 1-22 (MGFRVLVLIVMVTTSALPFTFS). A propeptide spanning residues 23 to 96 (EESGRSPFRP…AESPVGQKRW (74 aa)) is cleaved from the precursor. Positions 53-91 (RADGQPSDMRQPEMRRPEMRRPEVRRPEVRQPEFAESPV) are disordered. The segment covering 62-85 (RQPEMRRPEMRRPEVRRPEVRQPE) has biased composition (basic and acidic residues). Intrachain disulfides connect Cys-101-Cys-121 and Cys-105-Cys-117.

The protein belongs to the conotoxin R superfamily. As to expression, expressed by the venom duct.

It is found in the secreted. This chain is Conotoxin flf14.2, found in Conus anabathrum floridanus (Florida cone).